A 267-amino-acid chain; its full sequence is DNA damage-regulated autophagy modulator protein 2 (267 aa).

The next 6 membrane-spanning stretches (helical) occupy residues 8 to 28 (LSFL…FSYI), 53 to 73 (RCLF…TIYV), 87 to 107 (LIIK…LGLS), 118 to 138 (FIVH…YMFV), 160 to 180 (LLLV…SSIL), and 203 to 223 (VLHI…FGFF).

Belongs to the DRAM/TMEM150 family.

It localises to the lysosome membrane. Its subcellular location is the photoreceptor inner segment. It is found in the apical cell membrane. Its function is as follows. Plays a role in the initiation of autophagy. In the retina, might be involved in the process of photoreceptor cells renewal and recycling to preserve visual function. Induces apoptotic cell death when coexpressed with DRAM1. This is DNA damage-regulated autophagy modulator protein 2 (Dram2) from Rattus norvegicus (Rat).